The following is a 242-amino-acid chain: Probable septum site-determining protein MinC (242 aa).

Belongs to the MinC family. As to quaternary structure, interacts with MinD and FtsZ.

Cell division inhibitor that blocks the formation of polar Z ring septums. Rapidly oscillates between the poles of the cell to destabilize FtsZ filaments that have formed before they mature into polar Z rings. Prevents FtsZ polymerization. This chain is Probable septum site-determining protein MinC, found in Brucella anthropi (strain ATCC 49188 / DSM 6882 / CCUG 24695 / JCM 21032 / LMG 3331 / NBRC 15819 / NCTC 12168 / Alc 37) (Ochrobactrum anthropi).